The chain runs to 137 residues: uncharacterized protein (137 aa).

The segment at 31-83 (PASPINDKEKDKAGGRLPSGSEPRARAFCEAGADGEQGDPSPADTIKANQGHI) is disordered.

This is an uncharacterized protein from Homo sapiens (Human).